The following is a 115-amino-acid chain: Probable non-functional T cell receptor beta variable 23-1 (115 aa).

Residues 1–21 form the signal peptide; sequence MGTRLLGCAALCLLAADSFHA. The Ig-like domain occupies 22–115; that stretch reads KVTQTPGHLV…TALYLCASSQ (94 aa). An intrachain disulfide couples cysteine 42 to cysteine 111.

As to quaternary structure, alpha-beta TR is a heterodimer composed of an alpha and beta chain; disulfide-linked. The alpha-beta TR is associated with the transmembrane signaling CD3 coreceptor proteins to form the TR-CD3 (TcR or TCR). The assembly of alpha-beta TR heterodimers with CD3 occurs in the endoplasmic reticulum where a single alpha-beta TR heterodimer associates with one CD3D-CD3E heterodimer, one CD3G-CD3E heterodimer and one CD247 homodimer forming a stable octameric structure. CD3D-CD3E and CD3G-CD3E heterodimers preferentially associate with TR alpha and TR beta chains, respectively. The association of the CD247 homodimer is the last step of TcR assembly in the endoplasmic reticulum and is required for transport to the cell surface.

The protein localises to the cell membrane. Its function is as follows. Probable non-functional open reading frame (ORF) of V region of the variable domain of T cell receptor (TR) beta chain. Non-functional ORF generally cannot participate in the synthesis of a productive T cell receptor (TR) chain due to altered V-(D)-J or switch recombination and/or splicing site (at mRNA level) and/or conserved amino acid change (protein level). Alpha-beta T cell receptors are antigen specific receptors which are essential to the immune response and are present on the cell surface of T lymphocytes. Recognize peptide-major histocompatibility (MH) (pMH) complexes that are displayed by antigen presenting cells (APC), a prerequisite for efficient T cell adaptive immunity against pathogens. Binding of alpha-beta TR to pMH complex initiates TR-CD3 clustering on the cell surface and intracellular activation of LCK that phosphorylates the ITAM motifs of CD3G, CD3D, CD3E and CD247 enabling the recruitment of ZAP70. In turn ZAP70 phosphorylates LAT, which recruits numerous signaling molecules to form the LAT signalosome. The LAT signalosome propagates signal branching to three major signaling pathways, the calcium, the mitogen-activated protein kinase (MAPK) kinase and the nuclear factor NF-kappa-B (NF-kB) pathways, leading to the mobilization of transcription factors that are critical for gene expression and essential for T cell growth and differentiation. The T cell repertoire is generated in the thymus, by V-(D)-J rearrangement. This repertoire is then shaped by intrathymic selection events to generate a peripheral T cell pool of self-MH restricted, non-autoaggressive T cells. Post-thymic interaction of alpha-beta TR with the pMH complexes shapes TR structural and functional avidity. The sequence is that of Probable non-functional T cell receptor beta variable 23-1 from Homo sapiens (Human).